Reading from the N-terminus, the 215-residue chain is Probable cutinase 3 (215 aa).

An N-terminal signal peptide occupies residues 1–17 (MHFRALLVSALATLAMA). 2 disulfides stabilise this stretch: Cys39-Cys118 and Cys65-Cys79. The Nucleophile role is filled by Ser129. Cysteines 180 and 187 form a disulfide. Asp184 is an active-site residue. Catalysis depends on His197, which acts as the Proton donor/acceptor.

This sequence belongs to the cutinase family.

The protein resides in the secreted. It catalyses the reaction cutin + H2O = cutin monomers.. Catalyzes the hydrolysis of complex carboxylic polyesters found in the cell wall of plants. Degrades cutin, a macromolecule that forms the structure of the plant cuticle. This chain is Probable cutinase 3, found in Aspergillus clavatus (strain ATCC 1007 / CBS 513.65 / DSM 816 / NCTC 3887 / NRRL 1 / QM 1276 / 107).